The primary structure comprises 1016 residues: UvrABC system protein A (1016 aa).

An ATP-binding site is contributed by 32–39 (GVSGSGKS). A C4-type zinc finger spans residues 259 to 286 (CPEHGSVLEELEPRSFSFNSPYGACGDC). ABC transporter domains follow at residues 315–627 (WTKK…KNSL) and 647–975 (GNGK…EYLR). ATP is bound at residue 679–686 (GPSGSGKS). The C4-type zinc-finger motif lies at 778-804 (CEHCKGDGVMKIEMNFLPDIYVPCEVC). Residues 984–1016 (EPRARGEKAEKPAKAKAPAKKRTKKQTELVEAD) are disordered. Residues 985-996 (PRARGEKAEKPA) are compositionally biased toward basic and acidic residues.

It belongs to the ABC transporter superfamily. UvrA family. In terms of assembly, forms a heterotetramer with UvrB during the search for lesions.

The protein localises to the cytoplasm. Functionally, the UvrABC repair system catalyzes the recognition and processing of DNA lesions. UvrA is an ATPase and a DNA-binding protein. A damage recognition complex composed of 2 UvrA and 2 UvrB subunits scans DNA for abnormalities. When the presence of a lesion has been verified by UvrB, the UvrA molecules dissociate. The sequence is that of UvrABC system protein A from Deinococcus radiodurans (strain ATCC 13939 / DSM 20539 / JCM 16871 / CCUG 27074 / LMG 4051 / NBRC 15346 / NCIMB 9279 / VKM B-1422 / R1).